Reading from the N-terminus, the 68-residue chain is Small cysteine-rich protein 5 (68 aa).

An N-terminal signal peptide occupies residues Met-1–Ala-24.

The protein belongs to the Cnidaria small cysteine-rich protein (SCRiP) family. gamma subfamily. In terms of processing, contains 4 disulfide bonds.

Its subcellular location is the secreted. It is found in the nematocyst. Functionally, induces neurotoxic symptoms on zebrafish. Has also been claimed to be implied in calcification, but tests on homolog proteins suggest that proteins of this family have a neurotoxic function and not a calcification function. This Orbicella faveolata (Mountainous star coral) protein is Small cysteine-rich protein 5.